The sequence spans 28 residues: NU-theraphotoxin-Preg1a (28 aa).

3 disulfides stabilise this stretch: Cys-2–Cys-19, Cys-9–Cys-22, and Cys-18–Cys-27.

As to expression, expressed by the venom gland.

Its subcellular location is the secreted. In terms of biological role, toxin that acts as an agonist on melanocortin receptors (MC1R, MC3R, MC5R, MC5R). After binding to MC1R, the peptide activates the hMC1R/Gs pathway, but after binding to MC4R, it is not able to activate or antagonize the MC4R/Gs pathway. Inhibits melanocyte stimulating hormone (MSH)-binding to human receptors (Ki=1.8 uM to MC1R, Ki=19.8 uM to MC3R, Ki=7.1 uM to MC4R, Ki=10.0 uM to MC5R). This toxin is structurally unrelated to the natural agonists. The chain is NU-theraphotoxin-Preg1a from Poecilotheria regalis (Indian ornamental tree spider).